The following is a 376-amino-acid chain: Beta-centractin (376 aa).

The residue at position 1 (Met1) is an N-acetylmethionine. Tyr4 carries the post-translational modification 3'-nitrotyrosine.

It belongs to the actin family. ARP1 subfamily.

It is found in the cytoplasm. It localises to the cytoskeleton. The protein resides in the microtubule organizing center. The protein localises to the centrosome. Component of a multi-subunit complex involved in microtubule based vesicle motility. It is associated with the centrosome. In Homo sapiens (Human), this protein is Beta-centractin (ACTR1B).